A 312-amino-acid polypeptide reads, in one-letter code: tRNA dimethylallyltransferase (312 aa).

17-24 (GPTASGKT) lines the ATP pocket. 19-24 (TASGKT) provides a ligand contact to substrate. 3 interaction with substrate tRNA regions span residues 42 to 45 (DSAL), 166 to 170 (QRLLR), and 247 to 252 (RCVGYR).

Belongs to the IPP transferase family. In terms of assembly, monomer. Mg(2+) serves as cofactor.

The enzyme catalyses adenosine(37) in tRNA + dimethylallyl diphosphate = N(6)-dimethylallyladenosine(37) in tRNA + diphosphate. Functionally, catalyzes the transfer of a dimethylallyl group onto the adenine at position 37 in tRNAs that read codons beginning with uridine, leading to the formation of N6-(dimethylallyl)adenosine (i(6)A). This chain is tRNA dimethylallyltransferase, found in Sodalis glossinidius (strain morsitans).